A 498-amino-acid polypeptide reads, in one-letter code: Cytochrome P450 71B31 (498 aa).

The helical transmembrane segment at 3–23 (MFLGLLFLFPLFFILFKNLLP) threads the bilayer. Heme is bound at residue cysteine 441.

This sequence belongs to the cytochrome P450 family. It depends on heme as a cofactor.

Its subcellular location is the membrane. The sequence is that of Cytochrome P450 71B31 (CYP71B31) from Arabidopsis thaliana (Mouse-ear cress).